The following is a 511-amino-acid chain: Sodium/proline symporter (511 aa).

The next 13 helical transmembrane spans lie at 16-36 (WQTY…GFYG), 54-74 (IGPY…WMIM), 85-105 (LSAI…YFVV), 139-159 (IISG…GFVS), 175-195 (GLLI…YLAV), 199-219 (DFFQ…VALL), 246-266 (VLGI…PHII), 284-304 (LGIS…LTGI), 327-347 (ILFH…AIMS), 381-401 (FVLI…TIAW), 407-427 (ILNL…PLVL), 438-458 (AGAI…ISWI), and 467-487 (FFGM…TYIV).

The protein belongs to the sodium:solute symporter (SSF) (TC 2.A.21) family.

The protein localises to the cell membrane. It carries out the reaction L-proline(in) + Na(+)(in) = L-proline(out) + Na(+)(out). Functionally, catalyzes the sodium-dependent uptake of extracellular L-proline. The sequence is that of Sodium/proline symporter (putP) from Staphylococcus epidermidis (strain ATCC 12228 / FDA PCI 1200).